Here is a 319-residue protein sequence, read N- to C-terminus: Dehydrogenase/reductase SDR family member 9 (319 aa).

Residues 1-20 (MLLWVLALLFLCAFLWNYKG) form the signal peptide. Residues 34-58 (ITGCDSGFGNLAARTFDRKGFRVIA) and Asp83 contribute to the NAD(+) site. Ser164 provides a ligand contact to substrate. Tyr176 functions as the Proton acceptor in the catalytic mechanism. Lys180 contacts NAD(+).

The protein belongs to the short-chain dehydrogenases/reductases (SDR) family. Homotetramer. In terms of tissue distribution, highly expressed in epithelium of estrus uterus.

It is found in the microsome membrane. Its subcellular location is the endoplasmic reticulum membrane. It catalyses the reaction 3beta-hydroxy-5alpha-pregnane-20-one + NAD(+) = 5alpha-pregnane-3,20-dione + NADH + H(+). It carries out the reaction 17beta-hydroxy-5alpha-androstan-3-one + NAD(+) = 5alpha-androstan-3,17-dione + NADH + H(+). The enzyme catalyses androsterone + NAD(+) = 5alpha-androstan-3,17-dione + NADH + H(+). The catalysed reaction is 5alpha-androstane-3alpha,17beta-diol + NAD(+) = 17beta-hydroxy-5alpha-androstan-3-one + NADH + H(+). It catalyses the reaction all-trans-retinol + NAD(+) = all-trans-retinal + NADH + H(+). It carries out the reaction 3alpha-hydroxy-5alpha-pregnan-20-one + NAD(+) = 5alpha-pregnane-3,20-dione + NADH + H(+). Functionally, 3-alpha-hydroxysteroid dehydrogenase that converts 3-alpha-tetrahydroprogesterone (allopregnanolone) to dihydroxyprogesterone and 3-alpha-androstanediol to dihydroxyprogesterone. Plays also role in the biosynthesis of retinoic acid from retinaldehyde. Can utilize both NADH and NADPH. The chain is Dehydrogenase/reductase SDR family member 9 (Dhrs9) from Rattus norvegicus (Rat).